Reading from the N-terminus, the 307-residue chain is Glycerol-3-phosphate dehydrogenase [NAD(P)+] (307 aa).

Positions 14, 34, 35, and 82 each coordinate NADPH. 2 residues coordinate sn-glycerol 3-phosphate: Lys-82 and Gly-110. An NADPH-binding site is contributed by Ser-114. Sn-glycerol 3-phosphate contacts are provided by Lys-165, Asp-218, Ser-228, Arg-229, and Asn-230. Lys-165 (proton acceptor) is an active-site residue. Arg-229 is an NADPH binding site. Residue Glu-255 coordinates NADPH.

This sequence belongs to the NAD-dependent glycerol-3-phosphate dehydrogenase family.

It is found in the cytoplasm. It catalyses the reaction sn-glycerol 3-phosphate + NAD(+) = dihydroxyacetone phosphate + NADH + H(+). The catalysed reaction is sn-glycerol 3-phosphate + NADP(+) = dihydroxyacetone phosphate + NADPH + H(+). The protein operates within membrane lipid metabolism; glycerophospholipid metabolism. Catalyzes the reduction of the glycolytic intermediate dihydroxyacetone phosphate (DHAP) to sn-glycerol 3-phosphate (G3P), the key precursor for phospholipid synthesis. The polypeptide is Glycerol-3-phosphate dehydrogenase [NAD(P)+] (Nostoc sp. (strain PCC 7120 / SAG 25.82 / UTEX 2576)).